We begin with the raw amino-acid sequence, 160 residues long: MSEAKKYVMTYEGVKKLEEELEFLKTVKRKEITEKIKVALSFGDLSENSEYDEAKNEQAFVEGRIIQLENMLKNASIVDENEVPKDIVSVGSIVKVKDYEFDEEVEYIIVGSAEADPMNNKISNESPVGHGLIGKKVGDIIEVTVPDGVSKYEILEVNRA.

Residues 12–76 (EGVKKLEEEL…QLENMLKNAS (65 aa)) adopt a coiled-coil conformation.

Belongs to the GreA/GreB family.

In terms of biological role, necessary for efficient RNA polymerase transcription elongation past template-encoded arresting sites. The arresting sites in DNA have the property of trapping a certain fraction of elongating RNA polymerases that pass through, resulting in locked ternary complexes. Cleavage of the nascent transcript by cleavage factors such as GreA or GreB allows the resumption of elongation from the new 3'terminus. GreA releases sequences of 2 to 3 nucleotides. In Clostridium botulinum (strain Kyoto / Type A2), this protein is Transcription elongation factor GreA.